We begin with the raw amino-acid sequence, 155 residues long: Probable Brix domain-containing ribosomal biogenesis protein (155 aa).

The Brix domain maps to 1–155 (MLLTTSRKPS…LLIRDFRVGE (155 aa)).

Functionally, probably involved in the biogenesis of the ribosome. This is Probable Brix domain-containing ribosomal biogenesis protein from Methanothermobacter thermautotrophicus (strain ATCC 29096 / DSM 1053 / JCM 10044 / NBRC 100330 / Delta H) (Methanobacterium thermoautotrophicum).